The sequence spans 608 residues: Elongation factor 4 (608 aa).

In terms of domain architecture, tr-type G spans K11 to S193. GTP contacts are provided by residues D23 to T28 and N140 to D143.

Belongs to the TRAFAC class translation factor GTPase superfamily. Classic translation factor GTPase family. LepA subfamily.

The protein localises to the cell membrane. The catalysed reaction is GTP + H2O = GDP + phosphate + H(+). Required for accurate and efficient protein synthesis under certain stress conditions. May act as a fidelity factor of the translation reaction, by catalyzing a one-codon backward translocation of tRNAs on improperly translocated ribosomes. Back-translocation proceeds from a post-translocation (POST) complex to a pre-translocation (PRE) complex, thus giving elongation factor G a second chance to translocate the tRNAs correctly. Binds to ribosomes in a GTP-dependent manner. This chain is Elongation factor 4, found in Listeria monocytogenes serotype 4b (strain CLIP80459).